A 58-amino-acid chain; its full sequence is UPF0391 membrane protein Shewmr4_2671 (58 aa).

The next 2 membrane-spanning stretches (helical) occupy residues 6-26 and 28-48; these read LMFLVVAIIAGLFGFTGIAGA and AGIAKIIFFLFIVLLVISLLV.

This sequence belongs to the UPF0391 family.

The protein resides in the cell membrane. The sequence is that of UPF0391 membrane protein Shewmr4_2671 from Shewanella sp. (strain MR-4).